Consider the following 252-residue polypeptide: 5'-nucleotidase SurE (252 aa).

Positions 8, 9, 39, and 95 each coordinate a divalent metal cation.

The protein belongs to the SurE nucleotidase family. A divalent metal cation serves as cofactor.

The protein localises to the cytoplasm. It catalyses the reaction a ribonucleoside 5'-phosphate + H2O = a ribonucleoside + phosphate. In terms of biological role, nucleotidase that shows phosphatase activity on nucleoside 5'-monophosphates. This Thermoanaerobacter sp. (strain X514) protein is 5'-nucleotidase SurE.